The primary structure comprises 910 residues: SWI/SNF-related matrix-associated actin-dependent regulator of chromatin subfamily A-like protein 1 (910 aa).

Residues M1 to I170 form a disordered region. The residue at position 2 (S2) is an N-acetylserine. 2 mediates interaction with RPA2 regions span residues S2–A30 and L5–A30. Residues L3–L28 are a coiled coil. Basic and acidic residues predominate over residues E7–W29. Composition is skewed to polar residues over residues Q32–L54 and S70–T95. Residues E97–G107 are compositionally biased toward basic and acidic residues. Phosphoserine is present on S117. The segment covering E120–S131 has biased composition (polar residues). Residues F150 to A160 are compositionally biased toward basic and acidic residues. S164 is modified (phosphoserine). HARP domains follow at residues K198–E268 and S284–P355. The Helicase ATP-binding domain maps to S402–T557. An ATP-binding site is contributed by D415–T422. The DESH box signature appears at D506–H509. The short motif at R601–M618 is the Nuclear localization signal element. The Helicase C-terminal domain occupies Y672–A825. A compositionally biased stretch (low complexity) spans G865 to S875. The disordered stretch occupies residues G865–S890.

Belongs to the SNF2/RAD54 helicase family. SMARCAL1 subfamily. In terms of assembly, interacts with RPA2; the interaction is direct and mediates the recruitment by the RPA complex of SMARCAL1 to sites of DNA damage. DNA damage-regulated phosphorylation by kinases that may include ATM, ATR and PRKDC.

It is found in the nucleus. It carries out the reaction ATP + H2O = ADP + phosphate + H(+). ATP-dependent annealing helicase that binds selectively to fork DNA relative to ssDNA or dsDNA and catalyzes the rewinding of the stably unwound DNA. Rewinds single-stranded DNA bubbles that are stably bound by replication protein A (RPA). Acts throughout the genome to reanneal stably unwound DNA, performing the opposite reaction of many enzymes, such as helicases and polymerases, that unwind DNA. May play an important role in DNA damage response by acting at stalled replication forks. In Rattus norvegicus (Rat), this protein is SWI/SNF-related matrix-associated actin-dependent regulator of chromatin subfamily A-like protein 1 (Smarcal1).